The following is a 1380-amino-acid chain: Mitogen-activated protein kinase kinase kinase 5 (1380 aa).

Residues 30–97 are disordered; it reads CRRGGGAATA…GNSGSGGGRR (68 aa). Over residues 37–49 the composition is skewed to low complexity; the sequence is ATAAEGEPSLQPL. Residues 50–59 show a composition bias toward pro residues; it reads LVPPPPPPPG. 2 positions are modified to asymmetric dimethylarginine: arginine 85 and arginine 87. Serine 90 is subject to Phosphoserine; by PIM1 and PKB/AKT1. The interval 649-1374 is interaction with PPIA/CYPA; that stretch reads HCKRFFEMVN…MLCTLWKAII (726 aa). The Protein kinase domain maps to 687–945; it reads NGDRVVLGKG…ANDLLIDEFL (259 aa). ATP-binding positions include 693-701 and lysine 716; that span reads LGKGTYGIV. A Phosphotyrosine modification is found at tyrosine 725. Aspartate 810 (proton acceptor) is an active-site residue. Position 820 is a phosphothreonine; by autocatalysis (threonine 820). Threonine 845 is subject to Phosphothreonine; by autocatalysis, MELK and MAP3K6. The residue at position 849 (threonine 849) is a Phosphothreonine; by autocatalysis. At serine 965 the chain carries Phosphoserine. Serine 973 carries the phosphoserine; by autocatalysis modification. A phosphoserine mark is found at serine 1036 and serine 1040. The interval 1188–1215 is disordered; that stretch reads ASESDTADPEDLDVEDEHEELSSNQTVR. Positions 1192-1206 are enriched in acidic residues; it reads DTADPEDLDVEDEHE. Residues 1252–1292 adopt a coiled-coil conformation; sequence LGRMKIETNRLLEELVRKERELQALLHQAIEEKDQEIRHLK.

The protein belongs to the protein kinase superfamily. STE Ser/Thr protein kinase family. MAP kinase kinase kinase subfamily. As to quaternary structure, homodimer when inactive. Binds both upstream activators and downstream substrates in multimolecular complexes. Part of a cytoplasmic complex made of HIPK1, DAB2IP and MAP3K5 in response to TNF. This complex formation promotes MAP3K5-JNK activation and subsequent apoptosis. Interacts with SOCS1 which recognizes phosphorylation of Tyr-725 and induces MAP3K5/ASK1 degradation in endothelial cells. Interacts with the 14-3-3 family proteins such as YWHAB, YWHAE, YWHAQ, YWHAH, YWHAZ and SFN. Interacts with ARRB2, BIRC2, DAB2IP, IGF1R, MAP3K6/ASK2, PIM1, PGAM5, SOCS1, STUB1, TRAF2 and TXN. Interacts with ERN1 in a TRAF2-dependent manner. Interacts with calcineurin subunit PPP3R1, PPP5C, PPM1L and TRAF6. Interacts (via N-terminus) with RAF1 and this interaction inhibits the proapoptotic function of MAP3K5. Interacts with DAB2IP (via N-terminus C2 domain); the interaction occurs in a TNF-alpha-dependent manner. Interacts with DUSP13A; may positively regulate apoptosis. Interacts with PPIA/CYPA. Interacts with PRMT1; the interaction results in MAP3K5 methylation by PRMT1 which inhibits MAP3K5 activation. Interacts with TRAF2; the interaction is inhibited by PRMT1. Interacts with TRIM48. It depends on Mg(2+) as a cofactor. In terms of processing, ser-90 and Ser-1040 are inactivating phosphorylation sites, the former of which is phosphorylated by AKT1. Phosphorylated at Ser-973 which induces association of MAP3K5/ASK1 with the 14-3-3 family proteins and suppresses MAP3K5/ASK1 activity. Calcineurin (CN) dephosphorylates this site. Also dephosphorylated and activated by PGAM5. Phosphorylated at Thr-845 through autophosphorylation and by MAP3K6/ASK2 which leads to activation. Thr-845 is dephosphorylated by PPP5C. Phosphorylation at Ser-973 in response to oxidative stress is negatively regulated by PPIA/CYPA. Post-translationally, ubiquitinated. Tumor necrosis factor (TNF) induces TNFR2-dependent ubiquitination, leading to proteasomal degradation. Ubiquitinated by RC3H2 in a TRIM48-dependent manner. Methylation at Arg-85 and Arg-87 by PRMT1 promotes association of MAP3K5 with thioredoxin and negatively regulates MAP3K5 association with TRAF2, inhibiting MAP3K5 activation. Methylation is blocked by ubiquitination of PRMT1 by TRIM48. Expressed in various adult mouse tissues including heart, brain, lung, liver and kidney.

Its subcellular location is the cytoplasm. It localises to the endoplasmic reticulum. It carries out the reaction L-seryl-[protein] + ATP = O-phospho-L-seryl-[protein] + ADP + H(+). It catalyses the reaction L-threonyl-[protein] + ATP = O-phospho-L-threonyl-[protein] + ADP + H(+). Activated by various stressors, including oxidative stress, endoplasmic reticulum stress, and calcium overload, as well as by receptor-mediated inflammatory signals, such as the tumor necrosis factor (TNF) and lipopolysaccharide (LPS). Homophilic association of MAP3K5/ASK1 through the C-terminal coiled-coil domains and the heteromeric complex formation of MAP3K5/ASK1 with the reduced form of thioredoxin (TXN), constitutes an inactive form of the kinase. Upon ROS-induced dissociation of TXN from MAP3K5/ASK1, TRAF2 and TRAF6 are reciprocally recruited to MAP3K5/ASK1 and form the active MAP3K5/ASK1 signalosome, in which TRAF2 and TRAF6 appear to facilitate the active configuration of MAP3K5/ASK1. MAP3K5/ASK1 activity is also regulated through several phosphorylation and dephosphorylation events. Thr-845 is an activating phosphorylation site that is autophosphorylated and phosphorylated by MAP3K6/ASK2 and dephosphorylated by PPP5C. Ser-90 and Ser-1040 are inactivating phosphorylation sites, the former of which is phosphorylated by AKT1. Phosphorylation of Ser-973 induces association of MAP3K5/ASK1 with the 14-3-3 family proteins, which suppresses MAP3K5/ASK1 activity. Calcium/calmodulin-activated protein phosphatase calcineurin (PPP3CA) has been shown to directly dephosphorylate this site. SOCS1 binds to ASK1 by recognizing phosphorylation of Tyr-725 and induces MAP3K5/ASK1 degradation in endothelial cells. Also dephosphorylated and activated by PGAM5. Contains an N-terminal autoinhibitory domain. In terms of biological role, serine/threonine kinase which acts as an essential component of the MAP kinase signal transduction pathway. Plays an important role in the cascades of cellular responses evoked by changes in the environment. Mediates signaling for determination of cell fate such as differentiation and survival. Plays a crucial role in the apoptosis signal transduction pathway through mitochondria-dependent caspase activation. MAP3K5/ASK1 is required for the innate immune response, which is essential for host defense against a wide range of pathogens. Mediates signal transduction of various stressors like oxidative stress as well as by receptor-mediated inflammatory signals, such as the tumor necrosis factor (TNF) or lipopolysaccharide (LPS). Once activated, acts as an upstream activator of the MKK/JNK signal transduction cascade and the p38 MAPK signal transduction cascade through the phosphorylation and activation of several MAP kinase kinases like MAP2K4/SEK1, MAP2K3/MKK3, MAP2K6/MKK6 and MAP2K7/MKK7. These MAP2Ks in turn activate p38 MAPKs and c-jun N-terminal kinases (JNKs). Both p38 MAPK and JNKs control the transcription factors activator protein-1 (AP-1). This chain is Mitogen-activated protein kinase kinase kinase 5 (Map3k5), found in Mus musculus (Mouse).